An 89-amino-acid polypeptide reads, in one-letter code: MPEAPELDIFQKEVQEMKADQKSLEQRVSTLERTSDRHDQQIISINEKLNKIEENTTWIKRSITGAIITAVSTGIIGGAIAVFYNLLQK.

This sequence to B.licheniformis xpaF1 and to B.subtilis XhlA.

This is an uncharacterized protein from Bacillus licheniformis.